The sequence spans 302 residues: MRNRTLADLDRVVALGGGHGLGRVLSSLSSLGSRLTGIVTTTDNGGSTGRIRRSEGGIAWGDMRNCLNQLITEPSVASAMFEYRFGGNGELSGHNLGNLMLKALDHLSVRPLEAINLIRNLLKVDAHLIPMSEHPVDLMAIDDQGHEVYGEVNIDQLTTPIQELLLTPNVPATREAVHAINEADLIIIGPGSFYTSLMPILLLKEIAQALRRTPAPMVYIGNLGRELSLPAANLKLESKLAIMEQYVGKKVIDAVIVGPKVDVSAVKERIVIQEVLEASDIPYRHDRQLLHSALEKALQALG.

The protein belongs to the gluconeogenesis factor family.

It is found in the cytoplasm. Functionally, required for morphogenesis under gluconeogenic growth conditions. This is Putative gluconeogenesis factor (ybhK) from Escherichia coli O157:H7.